The following is a 128-amino-acid chain: L-ectoine synthase (128 aa).

It belongs to the ectoine synthase family.

The catalysed reaction is (2S)-4-acetamido-2-aminobutanoate = L-ectoine + H2O. The protein operates within amine and polyamine biosynthesis; ectoine biosynthesis; L-ectoine from L-aspartate 4-semialdehyde: step 3/3. Functionally, catalyzes the circularization of gamma-N-acetyl-alpha,gamma-diaminobutyric acid (ADABA) to ectoine (1,4,5,6-tetrahydro-2-methyl-4-pyrimidine carboxylic acid), which is an excellent osmoprotectant. This chain is L-ectoine synthase, found in Oceanobacillus iheyensis (strain DSM 14371 / CIP 107618 / JCM 11309 / KCTC 3954 / HTE831).